Reading from the N-terminus, the 97-residue chain is Citrate lyase acyl carrier protein (97 aa).

Residue S14 is modified to O-(phosphoribosyl dephospho-coenzyme A)serine.

It belongs to the CitD family. Oligomer with a subunit composition of (alpha,beta,gamma)6.

The protein resides in the cytoplasm. Functionally, covalent carrier of the coenzyme of citrate lyase. This is Citrate lyase acyl carrier protein from Rhodopseudomonas palustris (strain BisA53).